The following is a 388-amino-acid chain: Putative 8-amino-7-oxononanoate synthase (388 aa).

Residue Arg-23 participates in substrate binding. 110–111 (GY) contributes to the pyridoxal 5'-phosphate binding site. A substrate-binding site is contributed by His-135. Pyridoxal 5'-phosphate is bound by residues Ser-182, 207–210 (DDAH), and 238–241 (TLSK). Lys-241 is modified (N6-(pyridoxal phosphate)lysine). Position 355 (Thr-355) interacts with substrate.

It belongs to the class-II pyridoxal-phosphate-dependent aminotransferase family. BioF subfamily. Homodimer. Pyridoxal 5'-phosphate serves as cofactor.

It catalyses the reaction 6-carboxyhexanoyl-[ACP] + L-alanine + H(+) = (8S)-8-amino-7-oxononanoate + holo-[ACP] + CO2. Its pathway is cofactor biosynthesis; biotin biosynthesis. Catalyzes the decarboxylative condensation of pimeloyl-[acyl-carrier protein] and L-alanine to produce 8-amino-7-oxononanoate (AON), [acyl-carrier protein], and carbon dioxide. This is Putative 8-amino-7-oxononanoate synthase (bioF) from Thermodesulfovibrio yellowstonii (strain ATCC 51303 / DSM 11347 / YP87).